The chain runs to 376 residues: Palmitoyl-[acyl-carrier-protein] 4-desaturase 2, chloroplastic (376 aa).

A chloroplast-targeting transit peptide spans 1 to 33; that stretch reads MELHLALRASPLPAADPGRRPPPPRGNFATNCT. Residues E114, E149, H152, E202, E235, and H238 each contribute to the Fe cation site.

Belongs to the fatty acid desaturase type 2 family. As to quaternary structure, homodimer. Fe(2+) serves as cofactor. As to expression, preferentially expressed in the flower labellum.

It localises to the plastid. Its subcellular location is the chloroplast stroma. It catalyses the reaction hexadecanoyl-[ACP] + 2 reduced [2Fe-2S]-[ferredoxin] + O2 + 2 H(+) = (4Z)-hexadecenoyl-[ACP] + 2 oxidized [2Fe-2S]-[ferredoxin] + 2 H2O. It carries out the reaction octadecanoyl-[ACP] + 2 reduced [2Fe-2S]-[ferredoxin] + O2 + 2 H(+) = (9Z)-octadecenoyl-[ACP] + 2 oxidized [2Fe-2S]-[ferredoxin] + 2 H2O. It functions in the pathway lipid metabolism; fatty acid metabolism. Converts stearoyl-ACP to oleoyl-ACP by introduction of a cis double bond between carbons 9 and 10 of the acyl chain. Converts palmitoyl-ACP to (4Z)-hexadec-4-enoyl-ACP by introduction of a cis double bond between carbons 4 and 5 of the acyl chain. Catalyzes the desaturation of saturated fatty acid 18:0 and 16:0 to generate 18:1 (delta-9) and 16:1 (delta-4) intermediates, expected to give rise to 9-alkenes and 12-alkenes, respectively. The sequence is that of Palmitoyl-[acyl-carrier-protein] 4-desaturase 2, chloroplastic (SAD2) from Ophrys sphegodes (Early spider orchid).